The chain runs to 216 residues: ATP phosphoribosyltransferase (216 aa).

The protein belongs to the ATP phosphoribosyltransferase family. Short subfamily. In terms of assembly, heteromultimer composed of HisG and HisZ subunits.

It is found in the cytoplasm. It catalyses the reaction 1-(5-phospho-beta-D-ribosyl)-ATP + diphosphate = 5-phospho-alpha-D-ribose 1-diphosphate + ATP. The protein operates within amino-acid biosynthesis; L-histidine biosynthesis; L-histidine from 5-phospho-alpha-D-ribose 1-diphosphate: step 1/9. Its function is as follows. Catalyzes the condensation of ATP and 5-phosphoribose 1-diphosphate to form N'-(5'-phosphoribosyl)-ATP (PR-ATP). Has a crucial role in the pathway because the rate of histidine biosynthesis seems to be controlled primarily by regulation of HisG enzymatic activity. The chain is ATP phosphoribosyltransferase from Streptococcus thermophilus (strain ATCC BAA-491 / LMD-9).